The chain runs to 219 residues: EP300-interacting inhibitor of differentiation 2 (219 aa).

Residues 1-71 (MSELPADQGV…PVPEAREGPM (71 aa)) form a disordered region. The segment covering 20-34 (GDVRQAEVGGRRREP) has biased composition (basic and acidic residues). Omega-N-methylarginine is present on Arg-75. The disordered stretch occupies residues 95-115 (AEPAEEEGPEGRPRSRPGNGP).

As to quaternary structure, heterodimer with EID2B. Interacts with the C-terminus of EP300. Interacts with HDAC1 and HDAC2. Interacts with SMAD2, SMAD4 and with the MH2 domain of SMAD3.

Its subcellular location is the nucleus. Its function is as follows. Interacts with EP300 and acts as a repressor of MYOD-dependent transcription and muscle differentiation. Inhibits EP300 histone acetyltransferase activity. Acts as a repressor of TGFB/SMAD transcriptional responses. May act as a repressor of the TGFB/SMAD3-dependent signaling by selectively blocking formation of TGFB-induced SMAD3-SMAD4 complex. This is EP300-interacting inhibitor of differentiation 2 from Bos taurus (Bovine).